A 119-amino-acid polypeptide reads, in one-letter code: Immunoglobulin heavy variable 3-72 (119 aa).

Residues 1-19 form the signal peptide; that stretch reads MEFGLSWVFLVVILQGVQC. The tract at residues 20–44 is framework-1; that stretch reads EVQLVESGGGLVQPGGSLRLSCAAS. The Ig-like domain maps to 20–119; the sequence is EVQLVESGGG…EDTAVYYCAR (100 aa). A disulfide bridge links Cys41 with Cys117. Residues 45–52 are complementarity-determining-1; the sequence is GFTFSDHY. The framework-2 stretch occupies residues 53–69; it reads MDWVRQAPGKGLEWVGR. Positions 70–79 are complementarity-determining-2; that stretch reads TRNKANSYTT. Residues 80–117 are framework-3; that stretch reads EYAASVKGRFTISRDDSKNSLYLQMNSLKTEDTAVYYC. Residues 118–119 form a complementarity-determining-3 region; the sequence is AR.

As to quaternary structure, immunoglobulins are composed of two identical heavy chains and two identical light chains; disulfide-linked.

It localises to the secreted. The protein resides in the cell membrane. In terms of biological role, v region of the variable domain of immunoglobulin heavy chains that participates in the antigen recognition. Immunoglobulins, also known as antibodies, are membrane-bound or secreted glycoproteins produced by B lymphocytes. In the recognition phase of humoral immunity, the membrane-bound immunoglobulins serve as receptors which, upon binding of a specific antigen, trigger the clonal expansion and differentiation of B lymphocytes into immunoglobulins-secreting plasma cells. Secreted immunoglobulins mediate the effector phase of humoral immunity, which results in the elimination of bound antigens. The antigen binding site is formed by the variable domain of one heavy chain, together with that of its associated light chain. Thus, each immunoglobulin has two antigen binding sites with remarkable affinity for a particular antigen. The variable domains are assembled by a process called V-(D)-J rearrangement and can then be subjected to somatic hypermutations which, after exposure to antigen and selection, allow affinity maturation for a particular antigen. The protein is Immunoglobulin heavy variable 3-72 of Homo sapiens (Human).